The primary structure comprises 292 residues: Phosphoribulokinase 2 (292 aa).

12 to 20 (GSSGAGTST) lines the ATP pocket.

This sequence belongs to the phosphoribulokinase family.

The enzyme catalyses D-ribulose 5-phosphate + ATP = D-ribulose 1,5-bisphosphate + ADP + H(+). The protein operates within carbohydrate biosynthesis; Calvin cycle. The sequence is that of Phosphoribulokinase 2 (prkB) from Cereibacter sphaeroides (Rhodobacter sphaeroides).